The chain runs to 138 residues: Small ribosomal subunit protein uS11c (138 aa).

The tract at residues 1–23 (MAKPILRIGSRKNTRSGSRKNVR) is disordered. Positions 9-23 (GSRKNTRSGSRKNVR) are enriched in basic residues.

Belongs to the universal ribosomal protein uS11 family. Part of the 30S ribosomal subunit.

It is found in the plastid. The protein resides in the chloroplast. This Aethionema grandiflorum (Persian stone-cress) protein is Small ribosomal subunit protein uS11c.